Consider the following 318-residue polypeptide: NF-kappa-B inhibitor alpha (318 aa).

Residues 1–44 (MLSAHRPAEPPAVEGCEPPRKERQGGLLPPDDRHDSGLDSMKEE) form a disordered region. Positions 17 to 44 (EPPRKERQGGLLPPDDRHDSGLDSMKEE) are enriched in basic and acidic residues. K21 is covalently cross-linked (Glycyl lysine isopeptide (Lys-Gly) (interchain with G-Cter in ubiquitin)). S36 bears the Phosphoserine; by IKKA and IKKB mark. Phosphoserine; by IKKA, IKKB and IKKE is present on S40. At Y46 the chain carries Phosphotyrosine; by Tyr-kinases. ANK repeat units lie at residues 114–143 (LSQT…DLDV), 147–176 (RGNT…PHHL), 186–215 (NGHT…DVNA), and 220–249 (NGRT…DVNK).

This sequence belongs to the NF-kappa-B inhibitor family. In terms of processing, phosphorylated at Ser-36 and Ser-40 by IKKA/CHUK and IKKB/IKBKB; disables inhibition of NF-kappa-B DNA-binding activity. Phosphorylation at positions 36 and 40 is prerequisite to polyubiquitination and subsequent degradation. Post-translationally, monoubiquitinated at Lys-21 following phosphorylation at Ser-36 and Ser-40. The resulting polyubiquitination leads to protein degradation. Hydroxylated by HIF1AN. Highly expressed in lymph node, thymus followed by liver, brain, muscle, kidney, gastrointestinal and reproductive tract.

It localises to the cytoplasm. The protein localises to the nucleus. In terms of biological role, inhibits the activity of dimeric NF-kappa-B/REL complexes by trapping REL (RELA/p65 and NFKB1/p50) dimers in the cytoplasm by masking their nuclear localization signals. On cellular stimulation by immune and pro-inflammatory responses, becomes phosphorylated promoting ubiquitination and degradation, enabling the dimeric RELA to translocate to the nucleus and activate transcription. The sequence is that of NF-kappa-B inhibitor alpha (NFKBIA) from Gallus gallus (Chicken).